The chain runs to 374 residues: Ribonuclease D (374 aa).

The region spanning 3-171 is the 3'-5' exonuclease domain; it reads YQLITTDDGL…MAIRLVEETT (169 aa). An HRDC domain is found at 210–289; it reads KGRHLACLQK…AETQTMDAAE (80 aa).

It belongs to the RNase D family. A divalent metal cation serves as cofactor.

The protein localises to the cytoplasm. It carries out the reaction Exonucleolytic cleavage that removes extra residues from the 3'-terminus of tRNA to produce 5'-mononucleotides.. Exonuclease involved in the 3' processing of various precursor tRNAs. Initiates hydrolysis at the 3'-terminus of an RNA molecule and releases 5'-mononucleotides. The protein is Ribonuclease D of Musicola paradisiaca (strain Ech703) (Dickeya paradisiaca).